Consider the following 638-residue polypeptide: Dihydrolipoyllysine-residue acetyltransferase component of pyruvate dehydrogenase complex (638 aa).

Lipoyl-binding domains lie at 2-74 (SEII…IELE) and 117-191 (SQEV…LTLR). K40 is modified (N6-lipoyllysine). Residues 90–117 (PAAPTQAVDEAEAPSPGASATPAPAAAS) show a composition bias toward low complexity. A disordered region spans residues 90–119 (PAAPTQAVDEAEAPSPGASATPAPAAASQE). K157 bears the N6-lipoyllysine mark. The segment at 201–220 (APAAAAAASPAPAPLAPAAA) is disordered. A Lipoyl-binding 3 domain is found at 222-296 (PQEVKVPDIG…GTGDQILTLR (75 aa)). K262 is subject to N6-lipoyllysine. Low complexity predominate over residues 301–320 (APSGPRARGSPGQAAAAPGA). The disordered stretch occupies residues 301 to 336 (APSGPRARGSPGQAAAAPGAAPAPAPVGAPSRNGAK). Positions 338-375 (HAGPAVRQLAREFGVELAAINSTGPRGRILKEDVQAYV) constitute a Peripheral subunit-binding (PSBD) domain. Positions 382-638 (AKEAPAAGAA…LLADIRAILL (257 aa)) are catalytic. H611 is an active-site residue.

The protein belongs to the 2-oxoacid dehydrogenase family. Forms a 24-polypeptide structural core with octahedral symmetry. It depends on (R)-lipoate as a cofactor.

The enzyme catalyses N(6)-[(R)-dihydrolipoyl]-L-lysyl-[protein] + acetyl-CoA = N(6)-[(R)-S(8)-acetyldihydrolipoyl]-L-lysyl-[protein] + CoA. The pyruvate dehydrogenase complex catalyzes the overall conversion of pyruvate to acetyl-CoA and CO(2). It contains multiple copies of three enzymatic components: pyruvate dehydrogenase (E1), dihydrolipoamide acetyltransferase (E2) and lipoamide dehydrogenase (E3). The chain is Dihydrolipoyllysine-residue acetyltransferase component of pyruvate dehydrogenase complex from Azotobacter vinelandii.